We begin with the raw amino-acid sequence, 166 residues long: MDTEEIKEEMQEAAEAAIENAVETAELETAAIKAEGAAAAAEQSAEQAAVMAATLAASVEANAAQQIAEHSEQVQTQEEKISWLENQVMAMASNLQMMQEAVTALTVSQSLTPEPSPVPAVEVEAMPEAVTVEILPESAGDQQEAEPVPSVGDQQETAPRKRFRAI.

Residues 134–166 (ILPESAGDQQEAEPVPSVGDQQETAPRKRFRAI) are disordered.

In terms of assembly, heterodimer of P6 and P9; further multimerizes as hexamers of heterodimers. Part of the dodecameric portal complex that is composed of the packaging efficiency factor P6, the DNA packaging ATPase P9, and the internal heterododecamer P20/P22 which spans the virion inner membrane.

It is found in the virion. Functionally, together with the packaging ATPase P9, forms the external part of the portal vertex that is embeded in the capsid and which plays critical roles in genome packaging and genome ejection. Both proteins multimerize as a single ring-shaped heterdodecamer arranged around a central channel. The sequence is that of Packaging efficiency factor P6 (VI) from Acinetobacter calcoaceticus (Arthrobacter siderocapsulatus).